A 486-amino-acid chain; its full sequence is Glutamyl-tRNA(Gln) amidotransferase subunit A (486 aa).

Active-site charge relay system residues include lysine 75 and serine 150. Serine 174 (acyl-ester intermediate) is an active-site residue.

Belongs to the amidase family. GatA subfamily. As to quaternary structure, heterotrimer of A, B and C subunits.

The catalysed reaction is L-glutamyl-tRNA(Gln) + L-glutamine + ATP + H2O = L-glutaminyl-tRNA(Gln) + L-glutamate + ADP + phosphate + H(+). Its function is as follows. Allows the formation of correctly charged Gln-tRNA(Gln) through the transamidation of misacylated Glu-tRNA(Gln) in organisms which lack glutaminyl-tRNA synthetase. The reaction takes place in the presence of glutamine and ATP through an activated gamma-phospho-Glu-tRNA(Gln). This Nostoc sp. (strain PCC 7120 / SAG 25.82 / UTEX 2576) protein is Glutamyl-tRNA(Gln) amidotransferase subunit A.